A 262-amino-acid polypeptide reads, in one-letter code: Acyl-[acyl-carrier-protein]--UDP-N-acetylglucosamine O-acyltransferase (262 aa).

It belongs to the transferase hexapeptide repeat family. LpxA subfamily. In terms of assembly, homotrimer.

It is found in the cytoplasm. The enzyme catalyses a (3R)-hydroxyacyl-[ACP] + UDP-N-acetyl-alpha-D-glucosamine = a UDP-3-O-[(3R)-3-hydroxyacyl]-N-acetyl-alpha-D-glucosamine + holo-[ACP]. It participates in glycolipid biosynthesis; lipid IV(A) biosynthesis; lipid IV(A) from (3R)-3-hydroxytetradecanoyl-[acyl-carrier-protein] and UDP-N-acetyl-alpha-D-glucosamine: step 1/6. In terms of biological role, involved in the biosynthesis of lipid A, a phosphorylated glycolipid that anchors the lipopolysaccharide to the outer membrane of the cell. The polypeptide is Acyl-[acyl-carrier-protein]--UDP-N-acetylglucosamine O-acyltransferase (Shigella dysenteriae serotype 1 (strain Sd197)).